A 568-amino-acid polypeptide reads, in one-letter code: Autophagy-related protein 17 (568 aa).

Disordered stretches follow at residues 1-59 (MASF…DSSE) and 522-568 (SYEM…ERPF). The span at 522–546 (SYEMEAHGEPENEGKVETAYERETE) shows a compositional bias: basic and acidic residues.

Belongs to the ATG17 family.

Its subcellular location is the cytoplasm. The protein resides in the preautophagosomal structure membrane. Autophagy-specific protein that functions in response to autophagy-inducing signals as a scaffold to recruit other ATG proteins to organize pre-autophagosomal structure (PAS) formation. Modulates the timing and magnitude of the autophagy response, such as the size of the sequestering vesicles. Plays particularly a role in pexophagy and nucleophagy. The polypeptide is Autophagy-related protein 17 (apg-9) (Neurospora crassa (strain ATCC 24698 / 74-OR23-1A / CBS 708.71 / DSM 1257 / FGSC 987)).